The following is a 384-amino-acid chain: Conidiophore development protein hymA (384 aa).

Basic and acidic residues predominate over residues 362-374 (EPIEPSRSAREPS). The tract at residues 362-384 (EPIEPSRSAREPSRSTANTTTVA) is disordered.

It belongs to the Mo25 family.

Its subcellular location is the cytoplasm. Required for conidiophore development. The sequence is that of Conidiophore development protein hymA (hymA) from Emericella nidulans (strain FGSC A4 / ATCC 38163 / CBS 112.46 / NRRL 194 / M139) (Aspergillus nidulans).